Reading from the N-terminus, the 808-residue chain is Glutamate receptor 1.1 (808 aa).

The N-terminal stretch at M1–A19 is a signal peptide. The Extracellular portion of the chain corresponds to A20–K541. N-linked (GlcNAc...) asparagine glycosylation is found at N288, N339, and N504. The helical transmembrane segment at S542–E562 threads the bilayer. The Cytoplasmic segment spans residues R563–Q570. Residues G571 to A591 form a helical membrane-spanning segment. Topologically, residues H592–R602 are cytoplasmic. The chain crosses the membrane as a helical span at residues F603 to L623. Residues T624–R771 lie on the Extracellular side of the membrane. A helical transmembrane segment spans residues G772–T792. Residues R793 to K808 lie on the Cytoplasmic side of the membrane.

The protein belongs to the glutamate-gated ion channel (TC 1.A.10.1) family. As to quaternary structure, may form heteromers. In terms of tissue distribution, expressed predominantly in roots. First detected in the root-shoot junction, and later in lateral roots and at the margin of matures leaves.

It is found in the membrane. In terms of biological role, glutamate-gated receptor that probably acts as a non-selective cation channel. Can transport sodium, potassium, and calcium ions. Functions as a carbon and nitrogen regulator and/or sensor that regulates carbon and nitrogen metabolism and distinct physiological process such as germination through the control of acid abscisic (ABA) biosynthesis. May be involved in light-signal transduction and calcium homeostasis via the regulation of calcium influx into cells. Seems required for the regulation of the abscisic acid (ABA) signaling pathway that modulates many aspects of plant physiology such as seed germination and response to drought (e.g. stomata opening). The protein is Glutamate receptor 1.1 (GLR1.1) of Arabidopsis thaliana (Mouse-ear cress).